Consider the following 199-residue polypeptide: NAD(P)H dehydrogenase (quinone) (199 aa).

The Flavodoxin-like domain maps to 4 to 190 (VLVLYYSAYG…AGARYQGQVI (187 aa)). Residues 10-15 (SAYGHI) and 78-80 (TRF) each bind FMN. Tyr-12 contacts NAD(+). Trp-98 contributes to the substrate binding site. Residues 113-119 (STATQHG) and His-134 contribute to the FMN site.

Belongs to the WrbA family. FMN is required as a cofactor.

It carries out the reaction a quinone + NADH + H(+) = a quinol + NAD(+). The enzyme catalyses a quinone + NADPH + H(+) = a quinol + NADP(+). The chain is NAD(P)H dehydrogenase (quinone) from Rhodopseudomonas palustris (strain BisA53).